A 228-amino-acid polypeptide reads, in one-letter code: DNA mismatch repair protein MutH (228 aa).

It belongs to the MutH family.

The protein localises to the cytoplasm. Functionally, sequence-specific endonuclease that cleaves unmethylated GATC sequences. It is involved in DNA mismatch repair. The sequence is that of DNA mismatch repair protein MutH from Serratia proteamaculans (strain 568).